We begin with the raw amino-acid sequence, 446 residues long: MTTMTPQEIVSELDKHIVGQKNAKKAVAIALRNRWRRSQVAEPLRQEITPKNILMIGPTGVGKTEIARRLARLANAPFIKIEATKFTEVGYVGRDVETIIRDLVEMAIKSHRERAMKAMRARAEDAAEERILDVLLPTVRGPNFFAENSESTAAENTTRQKFRKKLREGELDDKEVDIEVAAPSLQAEIFAPPGMEELTQQIQGMFQSVGGGKKKSRKLSIKEALKLLTDEEAAKLVNDDDVKQEAVKAVEQNGIVFLDELDKIASRSEMHGADVSRQGVQRDLLPLVEGTTVSTKYGMIKTDHILFIASGAFHLSKPSDLIPELQGRFPIRVELDSLSVADFECILTQTDACLTRQYQALLETEGVQLEFVEDGIRRLAEIAFQVNEKTENIGARRLHTVMEKLLEEVSFDAGKVGLDKVLIDAAYVNTKLGELAADEDLSRYVL.

ATP is bound by residues V18, 60-65, D259, E324, and R396; that span reads GVGKTE.

This sequence belongs to the ClpX chaperone family. HslU subfamily. In terms of assembly, a double ring-shaped homohexamer of HslV is capped on each side by a ring-shaped HslU homohexamer. The assembly of the HslU/HslV complex is dependent on binding of ATP.

Its subcellular location is the cytoplasm. Its function is as follows. ATPase subunit of a proteasome-like degradation complex; this subunit has chaperone activity. The binding of ATP and its subsequent hydrolysis by HslU are essential for unfolding of protein substrates subsequently hydrolyzed by HslV. HslU recognizes the N-terminal part of its protein substrates and unfolds these before they are guided to HslV for hydrolysis. In Dechloromonas aromatica (strain RCB), this protein is ATP-dependent protease ATPase subunit HslU.